Reading from the N-terminus, the 459-residue chain is Argininosuccinate lyase (459 aa).

It belongs to the lyase 1 family. Argininosuccinate lyase subfamily.

Its subcellular location is the cytoplasm. The enzyme catalyses 2-(N(omega)-L-arginino)succinate = fumarate + L-arginine. It participates in amino-acid biosynthesis; L-arginine biosynthesis; L-arginine from L-ornithine and carbamoyl phosphate: step 3/3. In Oceanobacillus iheyensis (strain DSM 14371 / CIP 107618 / JCM 11309 / KCTC 3954 / HTE831), this protein is Argininosuccinate lyase.